Consider the following 133-residue polypeptide: Profilin Sal k 4.0201 (133 aa).

Cys-95 and Cys-117 are oxidised to a cystine.

It belongs to the profilin family. In terms of assembly, occurs in many kinds of cells as a complex with monomeric actin in a 1:1 ratio. As to expression, expressed in pollen (at protein and mRNA level).

Its subcellular location is the cytoplasm. The protein resides in the cytoskeleton. Binds to actin and affects the structure of the cytoskeleton. At high concentrations, profilin prevents the polymerization of actin, whereas it enhances it at low concentrations. This chain is Profilin Sal k 4.0201, found in Kali turgidum (Prickly saltwort).